A 98-amino-acid chain; its full sequence is NADH-ubiquinone oxidoreductase chain 4L (98 aa).

Helical transmembrane passes span 2–22 (PSISINITLAFTMALTGMLVF), 29–49 (SLLCLEGMMLSMFILSILFIM), and 61–81 (ILLLVLAACEAAIGLALLVMV).

This sequence belongs to the complex I subunit 4L family. Core subunit of respiratory chain NADH dehydrogenase (Complex I) which is composed of 45 different subunits.

It localises to the mitochondrion inner membrane. The catalysed reaction is a ubiquinone + NADH + 5 H(+)(in) = a ubiquinol + NAD(+) + 4 H(+)(out). In terms of biological role, core subunit of the mitochondrial membrane respiratory chain NADH dehydrogenase (Complex I) which catalyzes electron transfer from NADH through the respiratory chain, using ubiquinone as an electron acceptor. Part of the enzyme membrane arm which is embedded in the lipid bilayer and involved in proton translocation. The protein is NADH-ubiquinone oxidoreductase chain 4L (MT-ND4L) of Lepilemur mitsinjoensis (Mitsinjo sportive lemur).